Consider the following 99-residue polypeptide: Protein S100-Z (99 aa).

2 EF-hand domains span residues 13–48 (ITVFHNYSGSEGDKYKLSKGELKELLNAELTDFLMS) and 50–85 (KDPMLVEKIMNDLDSNKDNEVDFNEFVVLVAALTVA). 10 residues coordinate Ca(2+): Ser-20, Glu-23, Asp-25, Lys-28, Glu-33, Asp-63, Asn-65, Asp-67, Glu-69, and Glu-74.

The protein belongs to the S-100 family. As to quaternary structure, homodimer. Homodimers may assemble into larger stable oligomers. In larva at 5 days post-fertilization, shows very restricted expression only in a few large cells of the olfactory placode. More widely expressed in the adult. Expressed at higher levels in gut than in spleen, head kidney and gill.

This is Protein S100-Z from Danio rerio (Zebrafish).